We begin with the raw amino-acid sequence, 92 residues long: C-C motif chemokine 4 (92 aa).

An N-terminal signal peptide occupies residues 1 to 23; it reads MKLCVSALSLLLLVAAFCAPGFS. 2 disulfides stabilise this stretch: Cys34-Cys58 and Cys35-Cys74.

This sequence belongs to the intercrine beta (chemokine CC) family. In terms of assembly, homodimer.

The protein localises to the secreted. Monokine with inflammatory and chemokinetic properties. This chain is C-C motif chemokine 4 (Ccl4), found in Mus musculus (Mouse).